A 267-amino-acid polypeptide reads, in one-letter code: MDKRPIGVMDSGLGGLSVIRVLREQLPQESVIFVGDQGHFPYGTKTKEQIQQLALRIGKFLLEQDVKMMIIACNTATAAALRLLQNELPIPVIGVIKPGAMAATQHHYKKIGVIGTESTIKNGAYAKTLAKLNPDLSVISSPAQPLVSIVEHGQTGTSEAQKAVDTELEVFDNQSIEALILGCTHFPFLQKEIHNKLGSNVQLIDPAFETIRQAKELLTGKNQLSDNLASSINLYSTGDAKDLVAGAQQWLPNGYSKCAHIELNEEG.

Substrate contacts are provided by residues 10–11 (DS) and 42–43 (YG). Cys73 acts as the Proton donor/acceptor in catalysis. 74-75 (NT) contributes to the substrate binding site. Catalysis depends on Cys183, which acts as the Proton donor/acceptor. 184–185 (TH) serves as a coordination point for substrate.

This sequence belongs to the aspartate/glutamate racemases family.

The enzyme catalyses L-glutamate = D-glutamate. It participates in cell wall biogenesis; peptidoglycan biosynthesis. In terms of biological role, provides the (R)-glutamate required for cell wall biosynthesis. This chain is Glutamate racemase, found in Limosilactobacillus reuteri (strain DSM 20016) (Lactobacillus reuteri).